Reading from the N-terminus, the 279-residue chain is ATP synthase gamma chain (279 aa).

This sequence belongs to the ATPase gamma chain family. F-type ATPases have 2 components, CF(1) - the catalytic core - and CF(0) - the membrane proton channel. CF(1) has five subunits: alpha(3), beta(3), gamma(1), delta(1), epsilon(1). CF(0) has three main subunits: a, b and c.

Its subcellular location is the cell membrane. Produces ATP from ADP in the presence of a proton gradient across the membrane. The gamma chain is believed to be important in regulating ATPase activity and the flow of protons through the CF(0) complex. In Mycoplasmopsis pulmonis (strain UAB CTIP) (Mycoplasma pulmonis), this protein is ATP synthase gamma chain.